A 95-amino-acid polypeptide reads, in one-letter code: Phosphoribosyl-ATP pyrophosphatase (95 aa).

This sequence belongs to the PRA-PH family.

Its subcellular location is the cytoplasm. The enzyme catalyses 1-(5-phospho-beta-D-ribosyl)-ATP + H2O = 1-(5-phospho-beta-D-ribosyl)-5'-AMP + diphosphate + H(+). It functions in the pathway amino-acid biosynthesis; L-histidine biosynthesis; L-histidine from 5-phospho-alpha-D-ribose 1-diphosphate: step 2/9. This chain is Phosphoribosyl-ATP pyrophosphatase, found in Halobacterium salinarum (strain ATCC 29341 / DSM 671 / R1).